Here is an 85-residue protein sequence, read N- to C-terminus: Large ribosomal subunit protein bL27 (85 aa).

A disordered region spans residues 1–21; it reads MAHKKAGGSTRNGRDSRGKRL.

This sequence belongs to the bacterial ribosomal protein bL27 family.

This chain is Large ribosomal subunit protein bL27, found in Blochmanniella floridana.